The chain runs to 289 residues: Coiled-coil domain-containing protein 137 (289 aa).

3 disordered regions span residues 1-64 (MAGA…QEIP), 149-184 (EVQA…EKAA), and 204-225 (QPPE…GRRS). Low complexity predominate over residues 7-20 (GAAVSRVQAGPGSP). S19 carries the phosphoserine modification. Residues 155–197 (KEKSEQKKAKKAFQKRRLDKVRRKKEEKAADRLEQELLRDTVK) adopt a coiled-coil conformation. Residues 162–177 (KAKKAFQKRRLDKVRR) show a composition bias toward basic residues. S233 is modified (phosphoserine). Residues 247-273 (RQRIVEEERERAVQAYRALKQRQQQLH) adopt a coiled-coil conformation. A disordered region spans residues 265-289 (LKQRQQQLHGERPHLTSRKKPEPQL). Residues 273–289 (HGERPHLTSRKKPEPQL) show a composition bias toward basic and acidic residues.

It localises to the chromosome. The chain is Coiled-coil domain-containing protein 137 (CCDC137) from Homo sapiens (Human).